Here is a 479-residue protein sequence, read N- to C-terminus: Protein C-ets-2 (479 aa).

One can recognise a PNT domain in the interval 88–173 (DTFSGFTKEQ…EHLEQMIKDS (86 aa)). The segment at residues 373-453 (IQLWQFLLEL…SGKRYVYRFV (81 aa)) is a DNA-binding region (ETS).

Belongs to the ETS family.

The protein localises to the nucleus. Functionally, probable transcription factor. This is Protein C-ets-2 (ETS2) from Gallus gallus (Chicken).